The following is a 160-amino-acid chain: Crossover junction endodeoxyribonuclease RuvC (160 aa).

Catalysis depends on residues Asp7, Glu73, and Asp145. 3 residues coordinate Mg(2+): Asp7, Glu73, and Asp145.

The protein belongs to the RuvC family. In terms of assembly, homodimer which binds Holliday junction (HJ) DNA. The HJ becomes 2-fold symmetrical on binding to RuvC with unstacked arms; it has a different conformation from HJ DNA in complex with RuvA. In the full resolvosome a probable DNA-RuvA(4)-RuvB(12)-RuvC(2) complex forms which resolves the HJ. The cofactor is Mg(2+).

The protein localises to the cytoplasm. It carries out the reaction Endonucleolytic cleavage at a junction such as a reciprocal single-stranded crossover between two homologous DNA duplexes (Holliday junction).. In terms of biological role, the RuvA-RuvB-RuvC complex processes Holliday junction (HJ) DNA during genetic recombination and DNA repair. Endonuclease that resolves HJ intermediates. Cleaves cruciform DNA by making single-stranded nicks across the HJ at symmetrical positions within the homologous arms, yielding a 5'-phosphate and a 3'-hydroxyl group; requires a central core of homology in the junction. The consensus cleavage sequence is 5'-(A/T)TT(C/G)-3'. Cleavage occurs on the 3'-side of the TT dinucleotide at the point of strand exchange. HJ branch migration catalyzed by RuvA-RuvB allows RuvC to scan DNA until it finds its consensus sequence, where it cleaves and resolves the cruciform DNA. The sequence is that of Crossover junction endodeoxyribonuclease RuvC from Synechococcus sp. (strain CC9311).